A 196-amino-acid chain; its full sequence is Probable thymidylate kinase (196 aa).

8–15 provides a ligand contact to ATP; it reads GIDASGKT.

It belongs to the thymidylate kinase family.

It carries out the reaction dTMP + ATP = dTDP + ADP. In Metallosphaera sedula (strain ATCC 51363 / DSM 5348 / JCM 9185 / NBRC 15509 / TH2), this protein is Probable thymidylate kinase.